The following is a 455-amino-acid chain: Bifunctional protein GlmU (455 aa).

A pyrophosphorylase region spans residues 1–229 (MSKKVMSVVI…LNEIEGINDG (229 aa)). Residues 11-14 (LAAG), Lys-25, Gln-76, 81-82 (GT), 103-105 (YGD), Gly-140, Glu-154, Asn-169, and Asn-227 contribute to the UDP-N-acetyl-alpha-D-glucosamine site. Asp-105 contacts Mg(2+). Mg(2+) is bound at residue Asn-227. Positions 230 to 250 (LQLARLERLFQKQQAEKLLLS) are linker. An N-acetyltransferase region spans residues 251 to 455 (GVRILDPARF…IQGWKRPKKT (205 aa)). Positions 333 and 351 each coordinate UDP-N-acetyl-alpha-D-glucosamine. His-363 serves as the catalytic Proton acceptor. UDP-N-acetyl-alpha-D-glucosamine-binding residues include Tyr-366 and Asn-377. Residues Ala-380, 386–387 (NY), Ser-405, Ala-423, and Arg-440 each bind acetyl-CoA.

The protein in the N-terminal section; belongs to the N-acetylglucosamine-1-phosphate uridyltransferase family. This sequence in the C-terminal section; belongs to the transferase hexapeptide repeat family. As to quaternary structure, homotrimer. Mg(2+) serves as cofactor.

The protein localises to the cytoplasm. The catalysed reaction is alpha-D-glucosamine 1-phosphate + acetyl-CoA = N-acetyl-alpha-D-glucosamine 1-phosphate + CoA + H(+). It carries out the reaction N-acetyl-alpha-D-glucosamine 1-phosphate + UTP + H(+) = UDP-N-acetyl-alpha-D-glucosamine + diphosphate. The protein operates within nucleotide-sugar biosynthesis; UDP-N-acetyl-alpha-D-glucosamine biosynthesis; N-acetyl-alpha-D-glucosamine 1-phosphate from alpha-D-glucosamine 6-phosphate (route II): step 2/2. Its pathway is nucleotide-sugar biosynthesis; UDP-N-acetyl-alpha-D-glucosamine biosynthesis; UDP-N-acetyl-alpha-D-glucosamine from N-acetyl-alpha-D-glucosamine 1-phosphate: step 1/1. It participates in bacterial outer membrane biogenesis; LPS lipid A biosynthesis. In terms of biological role, catalyzes the last two sequential reactions in the de novo biosynthetic pathway for UDP-N-acetylglucosamine (UDP-GlcNAc). The C-terminal domain catalyzes the transfer of acetyl group from acetyl coenzyme A to glucosamine-1-phosphate (GlcN-1-P) to produce N-acetylglucosamine-1-phosphate (GlcNAc-1-P), which is converted into UDP-GlcNAc by the transfer of uridine 5-monophosphate (from uridine 5-triphosphate), a reaction catalyzed by the N-terminal domain. The polypeptide is Bifunctional protein GlmU (Hamiltonella defensa subsp. Acyrthosiphon pisum (strain 5AT)).